The chain runs to 650 residues: Gamma-tubulin complex component 4 homolog (650 aa).

Ser-214 is subject to Phosphoserine. A Phosphothreonine modification is found at Thr-216. Ser-218 bears the Phosphoserine mark.

The protein belongs to the TUBGCP family.

The protein localises to the cytoplasm. It is found in the cytoskeleton. The protein resides in the microtubule organizing center. It localises to the centrosome. Gamma-tubulin complex is necessary for microtubule nucleation at the centrosome. In Drosophila melanogaster (Fruit fly), this protein is Gamma-tubulin complex component 4 homolog (Grip75).